The sequence spans 373 residues: Phosphoserine aminotransferase (373 aa).

An L-glutamate-binding site is contributed by Arg-47. Residues 81–82 (AR), Trp-113, Thr-164, Asp-185, and Gln-208 each bind pyridoxal 5'-phosphate. At Lys-209 the chain carries N6-(pyridoxal phosphate)lysine. 250-251 (NT) contributes to the pyridoxal 5'-phosphate binding site.

Belongs to the class-V pyridoxal-phosphate-dependent aminotransferase family. SerC subfamily. As to quaternary structure, homodimer. The cofactor is pyridoxal 5'-phosphate.

The protein resides in the cytoplasm. The enzyme catalyses O-phospho-L-serine + 2-oxoglutarate = 3-phosphooxypyruvate + L-glutamate. The catalysed reaction is 4-(phosphooxy)-L-threonine + 2-oxoglutarate = (R)-3-hydroxy-2-oxo-4-phosphooxybutanoate + L-glutamate. It participates in amino-acid biosynthesis; L-serine biosynthesis; L-serine from 3-phospho-D-glycerate: step 2/3. Its pathway is cofactor biosynthesis; pyridoxine 5'-phosphate biosynthesis; pyridoxine 5'-phosphate from D-erythrose 4-phosphate: step 3/5. Functionally, catalyzes the reversible conversion of 3-phosphohydroxypyruvate to phosphoserine and of 3-hydroxy-2-oxo-4-phosphonooxybutanoate to phosphohydroxythreonine. This Buchnera aphidicola subsp. Baizongia pistaciae (strain Bp) protein is Phosphoserine aminotransferase.